Consider the following 539-residue polypeptide: MKFDPEKIKKDAKENFDHAWNEGKKMVKTPTLNERYPRTTLRYGKAHPVYDTIQKLREAYMRMGFEEMMNPLIVDEKEVHKQFGSEALAVLDRCFYLAGLPRPNVGISDERIAQITEILGDIGEEGIDKIRKELHAYKKGKIEGDDLVPEISAALEVSDALVADMIDRVFPEFKELIPQASTKTLRSHMTSGWFISLGALLEREEPPFQFFSIDRCFRREQQEDASRLMTYYSASCVIMDEDVTVDHGKAVSEGLLSQFGFEKFLFRPDEKRSKYYVPDTQTEVFAFHPKLVGSNSKYSDGWIEVATFGIYSPTALAEYDIPYPVMNLGLGVERLAMILHDAPDVRSLTYPQIPQYSEWEMSDSGLAKQVFVDRMPETPEGQEIASAVVAQCELHGEEPSPCEFPAWEGEVCGRKVKVSVIEPEENTKLCGPAAFNEVVAYQGDILGIPNNKKWQKAFENHSARAGIRFIEAFAAQAAREIEEAAMSGADEHIVRIRIVKVPSEVNLKIGATAQRYITGKNKKIDIRGPVFTSVKAEFE.

Residues 188–190, 233–235, 275–276, and asparagine 327 contribute to the substrate site; these read HMT, SAS, and YY.

This sequence belongs to the class-II aminoacyl-tRNA synthetase family. O-phosphoseryl-tRNA(Cys) synthetase subfamily. As to quaternary structure, homotetramer. Interacts with SepCysS.

The enzyme catalyses tRNA(Cys) + O-phospho-L-serine + ATP = O-phospho-L-seryl-tRNA(Cys) + AMP + diphosphate. Its function is as follows. Catalyzes the attachment of O-phosphoserine (Sep) to tRNA(Cys). This Methanosarcina mazei (strain ATCC BAA-159 / DSM 3647 / Goe1 / Go1 / JCM 11833 / OCM 88) (Methanosarcina frisia) protein is O-phosphoserine--tRNA(Cys) ligase.